The sequence spans 303 residues: MRTDTDTWDIQTSVGSTALAVAAGRALARHPANGAPIDPYAELFCRAAGGQWSDLVQGKQSDHALSSEDFGRSFANFQAARTAFFDNFFTTTSDTGVRQVVLLASGLDCRAYRLQWPAETEVYELDQPLVQQFKQETLDAHGAAPSAVRHPISVDLRQDWSTILQESGFDPSRPSAWLVEGLLFFLKSSAQDLLLETIDSLAAPGSHIAVEQRDTYPDIEFEMRRAAAADSAEPGGSPLADFLALIYNESRSEAATWLRGRGWAAERIALLDYMNTSGFELPAYSSVGWDTLRYTNMVTAAKR.

Residues Asp-126 and 155 to 156 (DL) each bind S-adenosyl-L-methionine.

The protein belongs to the UPF0677 family.

Its function is as follows. Exhibits S-adenosyl-L-methionine-dependent methyltransferase activity. The sequence is that of Putative S-adenosyl-L-methionine-dependent methyltransferase MAB_0213c from Mycobacteroides abscessus (strain ATCC 19977 / DSM 44196 / CCUG 20993 / CIP 104536 / JCM 13569 / NCTC 13031 / TMC 1543 / L948) (Mycobacterium abscessus).